We begin with the raw amino-acid sequence, 228 residues long: MKSIFVAGTDTDVGKTYITAGLAVALRKMNVDVGVMKPFAAGTAQKKGFKSEDVEILAKAAQVADPENLINPQFFPIPASPYTAWKNLKTKPKVSTILSSFKKLSKLHEMILVEGMGGIMTPILKDYYITNLIKEMKIPSVIVTRSKVGTVNHTIMTIQMCQKYKIPIKGIIINDFDDDGYPIKNLKRDLESLTGVKVLGSIPFIKDMSNASLNRIFKKNIDLKSLLK.

12–17 (DVGKTY) is an ATP binding site. Thr-16 is a binding site for Mg(2+). The active site involves Lys-37. Residues Asp-53, 114–117 (EGMG), 174–175 (ND), 203–205 (PFI), and Asn-210 contribute to the ATP site. Mg(2+)-binding residues include Asp-53 and Glu-114.

It belongs to the dethiobiotin synthetase family. As to quaternary structure, homodimer. Requires Mg(2+) as cofactor.

Its subcellular location is the cytoplasm. The catalysed reaction is (7R,8S)-7,8-diammoniononanoate + CO2 + ATP = (4R,5S)-dethiobiotin + ADP + phosphate + 3 H(+). The protein operates within cofactor biosynthesis; biotin biosynthesis; biotin from 7,8-diaminononanoate: step 1/2. Its function is as follows. Catalyzes a mechanistically unusual reaction, the ATP-dependent insertion of CO2 between the N7 and N8 nitrogen atoms of 7,8-diaminopelargonic acid (DAPA, also called 7,8-diammoniononanoate) to form a ureido ring. This is ATP-dependent dethiobiotin synthetase BioD from Nitrosopumilus maritimus (strain SCM1).